Here is a 275-residue protein sequence, read N- to C-terminus: Large ribosomal subunit protein uL2 (275 aa).

Residues 221-275 (RGTAMNPVDHPHGGGEGRTGEGRVPVNPWGQPTKGYRTRSNKRTNSMIVQRRHKR) form a disordered region. The span at 229-241 (DHPHGGGEGRTGE) shows a compositional bias: basic and acidic residues.

Belongs to the universal ribosomal protein uL2 family. As to quaternary structure, part of the 50S ribosomal subunit. Forms a bridge to the 30S subunit in the 70S ribosome.

Its function is as follows. One of the primary rRNA binding proteins. Required for association of the 30S and 50S subunits to form the 70S ribosome, for tRNA binding and peptide bond formation. It has been suggested to have peptidyltransferase activity; this is somewhat controversial. Makes several contacts with the 16S rRNA in the 70S ribosome. In Dechloromonas aromatica (strain RCB), this protein is Large ribosomal subunit protein uL2.